The following is a 349-amino-acid chain: uncharacterized protein (349 aa).

10 helical membrane-spanning segments follow: residues 15–35, 53–73, 91–111, 120–140, 147–167, 179–199, 218–238, 248–268, 276–296, and 302–322; these read VHSP…NPVT, ISFC…MILI, WFLL…LMFS, NVVL…ILLL, LSMV…FWGV, FGLG…TTIL, LLGT…DHFM, WMLI…LAGL, INLA…LILL, and AQYL…IDNL. EamA domains lie at 39–164 and 191–319; these read IELG…VTVF and FISA…LSFI.

The protein belongs to the EamA transporter family.

It is found in the cell membrane. This is an uncharacterized protein from Synechocystis sp. (strain ATCC 27184 / PCC 6803 / Kazusa).